Reading from the N-terminus, the 937-residue chain is MTESKNSFNAKSTLQVGEKSYDYYALSAVPGMEKLPYSLKVLGENLLRTEDGANITEEHIEAIANWDASADPSIEIQFTPARVLMQDFTGVPCVVDLATMREAVKTLGGDPDKVNPLNPAEMVIDHSVIVEAFGRPDALEKNVEIEYERNEERYQFLRWGSEAFSNFRVVPPGTGIVHQVNIEYLARVVFDNDGLAYPDTCIGTDSHTTMENGLGILGWGVGGIEAEAAMLGQPVSMLIPRVVGFKLTGEIPVGVTATDVVLTITEMLRDHGVVQKFVEFYGNGVKSVPLANRATIGNMSPEFGSTCAMFPIDEETIKYLRLTGRPEEQIALVEAYAKAQGMWLEQDAPEAEYSEYLELDLSTVVPSIAGPKRPQDRILLSEAKEQFREDLKAYTNDPVQVDQSIPAKRMANEGGFQPGSTSDLDNYNASWPGEGESAAANAEGRPSNPVTVVSPQGGEYTIDHGMVAIASITSCTNTSNPSVMIGAGLIARKAAEKGLKSKPWVKTICAPGSQVVDGYYQRADLWKDLEALGFYLSGFGCTTCIGNSGPLPEEISEAINEHDLAATAVLSGNRNFEGRISPDVKMNYLASPIMVIAYAIAGTMDFDFENEALGQDQDGNDVFLKDIWPSTEEIEETIQAAISRELYEADYADVFKGDKQWQELDIPSGKTFEWDENSTYIRKAPYFDGMTAEPQPVTDIENARVLAKLGDSVTTDHISPASSIKPGTPAAQYLDAHGVERQDYNSLGSRRGNHEVMMRGTFANIRLQNQLVDIAGGYTRDFTQEGGPQAFIYDACVNYKEAGIPLVVLAGKEYGTGSSRDWAAKGTNLLGVRAVITESFERIHRSNLIGMGVVPLQFPEGESHESLGLDGTETFDITGLTALNEGTTPKTVKVTATKENGEKVEFDAVVRIDTPGEADYFRHGGILQYVLRQMAAS.

The interval 410–450 (MANEGGFQPGSTSDLDNYNASWPGEGESAAANAEGRPSNPV) is disordered. Positions 418–429 (PGSTSDLDNYNA) are enriched in polar residues. Positions 433–444 (GEGESAAANAEG) are enriched in low complexity. [4Fe-4S] cluster contacts are provided by cysteine 475, cysteine 541, and cysteine 544.

The protein belongs to the aconitase/IPM isomerase family. As to quaternary structure, monomer. [4Fe-4S] cluster serves as cofactor.

It carries out the reaction citrate = D-threo-isocitrate. The enzyme catalyses (2S,3R)-3-hydroxybutane-1,2,3-tricarboxylate = 2-methyl-cis-aconitate + H2O. It participates in carbohydrate metabolism; tricarboxylic acid cycle; isocitrate from oxaloacetate: step 2/2. Its pathway is organic acid metabolism; propanoate degradation. Its function is as follows. Involved in the catabolism of short chain fatty acids (SCFA) via the tricarboxylic acid (TCA)(acetyl degradation route) and probably via the 2-methylcitrate cycle I (propionate degradation route). Catalyzes the reversible isomerization of citrate to isocitrate via cis-aconitate. Could catalyze the hydration of 2-methyl-cis-aconitate to yield (2R,3S)-2-methylisocitrate. The apo form of AcnA functions as a RNA-binding regulatory protein. This is Aconitate hydratase A (acn) from Corynebacterium efficiens (strain DSM 44549 / YS-314 / AJ 12310 / JCM 11189 / NBRC 100395).